Reading from the N-terminus, the 280-residue chain is Keratin, type I cytoskeletal 47 kDa (280 aa).

Residues 1-81 (MSFRSSSSYS…SSSFSSFGGN (81 aa)) form a head region. Residues 82–117 (DKQTMQNLNDRLASYLEKVRALEAANADLELKIREW) are coil 1A. Residues 82–280 (DKQTMQNLND…RDAELWFNQK (199 aa)) form the IF rod domain. The tract at residues 118–139 (YEKQKGSGIGAASKDFSKYFEI) is linker 1. Positions 140-231 (ISDLRNKILF…KNHEEEMSIA (92 aa)) are coil 1B. A linker 12 region spans residues 232–254 (KGSAAGQVTVEMDAAPGVDLNKI). Residues 255 to 280 (LSDMRADYETLAEKNRRDAELWFNQK) form a coil 2 region.

It belongs to the intermediate filament family. In terms of assembly, heterotetramer of two type I and two type II keratins.

The polypeptide is Keratin, type I cytoskeletal 47 kDa (xk81b1) (Xenopus laevis (African clawed frog)).